The primary structure comprises 233 residues: Orotidine 5'-phosphate decarboxylase (233 aa).

Substrate is bound by residues aspartate 13, lysine 35, 62 to 71 (DLKFHDIPNT), threonine 122, arginine 182, glutamine 191, glycine 211, and arginine 212. Lysine 64 acts as the Proton donor in catalysis.

It belongs to the OMP decarboxylase family. Type 1 subfamily. Homodimer.

It carries out the reaction orotidine 5'-phosphate + H(+) = UMP + CO2. The protein operates within pyrimidine metabolism; UMP biosynthesis via de novo pathway; UMP from orotate: step 2/2. In terms of biological role, catalyzes the decarboxylation of orotidine 5'-monophosphate (OMP) to uridine 5'-monophosphate (UMP). The polypeptide is Orotidine 5'-phosphate decarboxylase (Pseudomonas putida (strain ATCC 47054 / DSM 6125 / CFBP 8728 / NCIMB 11950 / KT2440)).